The chain runs to 310 residues: 3,5-dioxohexanoate:acetyl-CoA acetone transferase (310 aa).

Residues His-49, His-51, and Glu-258 each coordinate Zn(2+).

The protein belongs to the BKACE family. It depends on Zn(2+) as a cofactor.

The enzyme catalyses 3,5-dioxohexanoate + acetyl-CoA = acetoacetyl-CoA + acetoacetate. Its function is as follows. Catalyzes the condensation of 3,5-dioxohexanoate and acetyl-CoA, forming acetoacetate and acetoacetyl-CoA. May be involved in fatty acid biosynthesis rescue via triacetic acid lactone. This Paraburkholderia graminis (strain ATCC 700544 / DSM 17151 / LMG 18924 / NCIMB 13744 / C4D1M) protein is 3,5-dioxohexanoate:acetyl-CoA acetone transferase.